The following is a 162-amino-acid chain: Protein A49 (162 aa).

Belongs to the poxviridae A49 protein family.

The chain is Protein A49 from Homo sapiens (Human).